Consider the following 362-residue polypeptide: Glutaminase-asparaginase (362 aa).

The N-terminal stretch at 1–25 (MKPLLHAFAPGVMALMLLLPQAAQA) is a signal peptide. Residues 35 to 362 (SNVVILATGG…KELQRIFWEY (328 aa)) enclose the Asparaginase/glutaminase domain. Thr45 serves as the catalytic Acyl-ester intermediate. Substrate is bound by residues Ser92 and 125-126 (TD).

The protein belongs to the asparaginase 1 family. In terms of assembly, homotetramer.

It localises to the periplasm. The catalysed reaction is L-glutamine + H2O = L-glutamate + NH4(+). It catalyses the reaction L-asparagine + H2O = L-aspartate + NH4(+). In Pseudomonas aeruginosa (strain ATCC 15692 / DSM 22644 / CIP 104116 / JCM 14847 / LMG 12228 / 1C / PRS 101 / PAO1), this protein is Glutaminase-asparaginase (ansB).